Reading from the N-terminus, the 644-residue chain is Exoribonuclease 2 (644 aa).

Residues 189–516 (RQDLTALNFV…NHRLLKAVIK (328 aa)) enclose the RNB domain. Positions 561–643 (DTRFAAEIID…DTRSIIARPA (83 aa)) constitute an S1 motif domain.

Belongs to the RNR ribonuclease family. RNase II subfamily.

The protein resides in the cytoplasm. The enzyme catalyses Exonucleolytic cleavage in the 3'- to 5'-direction to yield nucleoside 5'-phosphates.. In terms of biological role, involved in mRNA degradation. Hydrolyzes single-stranded polyribonucleotides processively in the 3' to 5' direction. The protein is Exoribonuclease 2 of Salmonella arizonae (strain ATCC BAA-731 / CDC346-86 / RSK2980).